Consider the following 349-residue polypeptide: Protein RAE1 (349 aa).

Residues 1-21 form a disordered region; it reads MATFGAPATANSNPNKSYEVT. The residue at position 2 (A2) is an N-acetylalanine. The segment covering 9–21 has biased composition (polar residues); sequence TANSNPNKSYEVT. WD repeat units follow at residues 23 to 62, 70 to 109, 112 to 151, 153 to 190, and 244 to 283; these read SPAD…ASLA, SHDQ…QPVT, MHEG…PVHT, QLPD…TEFK, and NDIY…RLKA. A DWD box motif is present at residues 128 to 144; sequence LLATGSWDKTLKYWDTR.

It belongs to the WD repeat rae1 family. Part of the nuclear pore complex (NPC). The NPC has an eight-fold symmetrical structure comprising a central transport channel and two rings, the cytoplasmic and nuclear rings, to which eight filaments are attached. The cytoplasmic filaments have loose ends, while the nuclear filaments are joined in a distal ring, forming a nuclear basket. NPCs are highly dynamic in configuration and composition, and can be devided in 3 subcomplexes, the NUP62 subcomplex, the NUP107-160 subcomplex and the NUP93 subcomplex, containing approximately 30 different nucleoporin proteins. Interacts with DDB1A.

It is found in the nucleus envelope. The protein resides in the nucleus. Its subcellular location is the nuclear pore complex. This chain is Protein RAE1, found in Arabidopsis thaliana (Mouse-ear cress).